The chain runs to 201 residues: FMN-dependent NADH:quinone oxidoreductase (201 aa).

Residues Ser10, 16–18 (SQS), 95–98 (MYNF), and 139–142 (TTGG) contribute to the FMN site.

This sequence belongs to the azoreductase type 1 family. As to quaternary structure, homodimer. The cofactor is FMN.

The enzyme catalyses 2 a quinone + NADH + H(+) = 2 a 1,4-benzosemiquinone + NAD(+). The catalysed reaction is N,N-dimethyl-1,4-phenylenediamine + anthranilate + 2 NAD(+) = 2-(4-dimethylaminophenyl)diazenylbenzoate + 2 NADH + 2 H(+). Its function is as follows. Quinone reductase that provides resistance to thiol-specific stress caused by electrophilic quinones. Functionally, also exhibits azoreductase activity. Catalyzes the reductive cleavage of the azo bond in aromatic azo compounds to the corresponding amines. The polypeptide is FMN-dependent NADH:quinone oxidoreductase (Tolumonas auensis (strain DSM 9187 / NBRC 110442 / TA 4)).